The chain runs to 204 residues: Imidazoleglycerol-phosphate dehydratase (204 aa).

This sequence belongs to the imidazoleglycerol-phosphate dehydratase family.

The protein resides in the cytoplasm. The enzyme catalyses D-erythro-1-(imidazol-4-yl)glycerol 3-phosphate = 3-(imidazol-4-yl)-2-oxopropyl phosphate + H2O. It functions in the pathway amino-acid biosynthesis; L-histidine biosynthesis; L-histidine from 5-phospho-alpha-D-ribose 1-diphosphate: step 6/9. This chain is Imidazoleglycerol-phosphate dehydratase, found in Rhodococcus erythropolis (strain PR4 / NBRC 100887).